The primary structure comprises 231 residues: Tol-Pal system protein TolQ (231 aa).

Transmembrane regions (helical) follow at residues 20 to 40 (IVVQ…WIMI), 134 to 154 (FLAT…VWGI), and 176 to 196 (IAEA…AVIA).

It belongs to the ExbB/TolQ family. As to quaternary structure, the Tol-Pal system is composed of five core proteins: the inner membrane proteins TolA, TolQ and TolR, the periplasmic protein TolB and the outer membrane protein Pal. They form a network linking the inner and outer membranes and the peptidoglycan layer.

Its subcellular location is the cell inner membrane. Part of the Tol-Pal system, which plays a role in outer membrane invagination during cell division and is important for maintaining outer membrane integrity. This is Tol-Pal system protein TolQ from Pseudomonas aeruginosa (strain ATCC 15692 / DSM 22644 / CIP 104116 / JCM 14847 / LMG 12228 / 1C / PRS 101 / PAO1).